The sequence spans 278 residues: Envelope glycoprotein L (278 aa).

The signal sequence occupies residues 1 to 30; that stretch reads MCRRPDCGFSFSPGPVVLLWCCLLLPIVSS. The 214-residue stretch at 43–256 folds into the gL betaherpesvirus-type domain; the sequence is VPAECPELTR…DKYYAGLPPE (214 aa). A disulfide bond links Cys-154 and Cys-159.

The protein belongs to the herpesviridae glycoprotein L (gL) family. Betaherpesvirinae gL subfamily. As to quaternary structure, interacts with glycoprotein H (gH); this interaction is necessary for the correct processing and cell surface expression of gH. Forms the envelope pentamer complex (PC) composed of gH, gL, UL128, UL130, and UL131A. The pentamer interacts with host NRP2. Forms the envelope trimer complex composed of gH, gL, and gO. The trimer interacts with host PDGFRA.

The protein localises to the virion membrane. It localises to the host cell membrane. Its subcellular location is the host Golgi apparatus. The protein resides in the host trans-Golgi network. Functionally, the heterodimer glycoprotein H-glycoprotein L is required for the fusion of viral and plasma membranes leading to virus entry into the host cell. Acts as a functional inhibitor of gH and maintains gH in an inhibited form. Upon binding to host integrins, gL dissociates from gH leading to activation of the viral fusion glycoproteins gB and gH. In human cytomegalovirus, forms two distincts complexes to mediate viral entry, a trimer and a pentamer at the surface of the virion envelope. The gH-gL-gO trimer is required for infection in fibroblasts by interacting with host PDGFRA. The gH-gL-UL128-UL130-UL131A pentamer is essential for viral entry in epithelial, endothelial and myeloid cells via interaction with host NRP2. The polypeptide is Envelope glycoprotein L (Human cytomegalovirus (strain AD169) (HHV-5)).